Reading from the N-terminus, the 171-residue chain is Crossover junction endodeoxyribonuclease RuvC (171 aa).

Catalysis depends on residues Asp7, Glu66, and Asp138. Mg(2+)-binding residues include Asp7, Glu66, and Asp138.

The protein belongs to the RuvC family. As to quaternary structure, homodimer which binds Holliday junction (HJ) DNA. The HJ becomes 2-fold symmetrical on binding to RuvC with unstacked arms; it has a different conformation from HJ DNA in complex with RuvA. In the full resolvosome a probable DNA-RuvA(4)-RuvB(12)-RuvC(2) complex forms which resolves the HJ. The cofactor is Mg(2+).

The protein resides in the cytoplasm. The catalysed reaction is Endonucleolytic cleavage at a junction such as a reciprocal single-stranded crossover between two homologous DNA duplexes (Holliday junction).. Its function is as follows. The RuvA-RuvB-RuvC complex processes Holliday junction (HJ) DNA during genetic recombination and DNA repair. Endonuclease that resolves HJ intermediates. Cleaves cruciform DNA by making single-stranded nicks across the HJ at symmetrical positions within the homologous arms, yielding a 5'-phosphate and a 3'-hydroxyl group; requires a central core of homology in the junction. The consensus cleavage sequence is 5'-(A/T)TT(C/G)-3'. Cleavage occurs on the 3'-side of the TT dinucleotide at the point of strand exchange. HJ branch migration catalyzed by RuvA-RuvB allows RuvC to scan DNA until it finds its consensus sequence, where it cleaves and resolves the cruciform DNA. The sequence is that of Crossover junction endodeoxyribonuclease RuvC from Francisella tularensis subsp. mediasiatica (strain FSC147).